The primary structure comprises 187 residues: UPF0301 protein Sala_0165 (187 aa).

It belongs to the UPF0301 (AlgH) family.

In Sphingopyxis alaskensis (strain DSM 13593 / LMG 18877 / RB2256) (Sphingomonas alaskensis), this protein is UPF0301 protein Sala_0165.